The chain runs to 830 residues: uncharacterized protein (830 aa).

A compositionally biased stretch (basic and acidic residues) spans 1–12 (MEKASKNKESGV). Residues 1–61 (MEKASKNKES…SIKSKNKKKT (61 aa)) are disordered. Residues 15–25 (ANNSFLQNFGV) are compositionally biased toward polar residues. Residues 249 to 433 (TVSKSSASGG…YSLVKFLHIN (185 aa)) form the Helicase ATP-binding domain. Residue 262 to 269 (DDMGLGKT) participates in ATP binding. The DEAH box motif lies at 384–387 (DEAH). In terms of domain architecture, Helicase C-terminal spans 662–816 (EEDDTVRGLR…KSVFTSKKLT (155 aa)). Position 712 is a phosphoserine (Ser712).

This sequence belongs to the SNF2/RAD54 helicase family.

Its subcellular location is the nucleus. This is an uncharacterized protein from Schizosaccharomyces pombe (strain 972 / ATCC 24843) (Fission yeast).